We begin with the raw amino-acid sequence, 344 residues long: Fe-S cluster assembly protein DRE2 (344 aa).

Positions 1–160 (MTSNILLLLH…KKLNNDNAST (160 aa)) are N-terminal SAM-like domain. The disordered stretch occupies residues 154-179 (NNDNASTPGLTDSSAGTSEDETATVS). Polar residues predominate over residues 155-170 (NDNASTPGLTDSSAGT). The tract at residues 161 to 223 (PGLTDSSAGT…NDLIAESNKY (63 aa)) is linker. Residues Cys-231, Cys-243, Cys-246, and Cys-248 each contribute to the [2Fe-2S] cluster site. A fe-S binding site A region spans residues 231–248 (CELPNGKKRKKACKDCTC). Residues Cys-313, Cys-316, Cys-324, and Cys-327 each contribute to the [4Fe-4S] cluster site. Short sequence motifs (cx2C motif) lie at residues 313–316 (CGSC) and 324–327 (CDGC). The interval 313–327 (CGSCSLGDAFRCDGC) is fe-S binding site B.

Belongs to the anamorsin family. Monomer. Interacts with TAH18. Interacts with MIA40. It depends on [2Fe-2S] cluster as a cofactor. [4Fe-4S] cluster serves as cofactor.

It localises to the cytoplasm. It is found in the mitochondrion intermembrane space. Its function is as follows. Component of the cytosolic iron-sulfur (Fe-S) protein assembly (CIA) machinery required for the maturation of extramitochondrial Fe-S proteins. Part of an electron transfer chain functioning in an early step of cytosolic Fe-S biogenesis, facilitating the de novo assembly of a [4Fe-4S] cluster on the scaffold complex CFD1-NBP35. Electrons are transferred to DRE2 from NADPH via the FAD- and FMN-containing protein TAH18. TAH18-DRE2 are also required for the assembly of the diferric tyrosyl radical cofactor of ribonucleotide reductase (RNR), probably by providing electrons for reduction during radical cofactor maturation in the catalytic small subunit RNR2. This is Fe-S cluster assembly protein DRE2 from Candida tropicalis (strain ATCC MYA-3404 / T1) (Yeast).